The primary structure comprises 330 residues: tRNA U34 carboxymethyltransferase (330 aa).

Residues lysine 91, tryptophan 105, lysine 110, glycine 130, aspartate 152–serine 154, isoleucine 181–glutamate 182, methionine 196, tyrosine 200, and arginine 315 contribute to the carboxy-S-adenosyl-L-methionine site.

This sequence belongs to the class I-like SAM-binding methyltransferase superfamily. CmoB family. As to quaternary structure, homotetramer.

The catalysed reaction is carboxy-S-adenosyl-L-methionine + 5-hydroxyuridine(34) in tRNA = 5-carboxymethoxyuridine(34) in tRNA + S-adenosyl-L-homocysteine + H(+). Catalyzes carboxymethyl transfer from carboxy-S-adenosyl-L-methionine (Cx-SAM) to 5-hydroxyuridine (ho5U) to form 5-carboxymethoxyuridine (cmo5U) at position 34 in tRNAs. This chain is tRNA U34 carboxymethyltransferase, found in Shewanella amazonensis (strain ATCC BAA-1098 / SB2B).